A 59-amino-acid polypeptide reads, in one-letter code: Large ribosomal subunit protein bL32 (59 aa).

The disordered stretch occupies residues 1–20 (MAVQQNKKSRSRKGMRRSHD). A compositionally biased stretch (basic residues) spans 7–19 (KKSRSRKGMRRSH).

This sequence belongs to the bacterial ribosomal protein bL32 family.

The polypeptide is Large ribosomal subunit protein bL32 (Nitratidesulfovibrio vulgaris (strain ATCC 29579 / DSM 644 / CCUG 34227 / NCIMB 8303 / VKM B-1760 / Hildenborough) (Desulfovibrio vulgaris)).